Consider the following 247-residue polypeptide: Probable membrane transporter protein y4hK (247 aa).

The next 6 helical transmembrane spans lie at 5 to 25 (AIGL…VGQA), 31 to 51 (IAAM…ALAL), 74 to 94 (VYPF…VHLP), 121 to 141 (SALV…ITGA), 202 to 222 (FLPW…LIGS), and 227 to 247 (ASWL…KLLW).

This sequence belongs to the 4-toluene sulfonate uptake permease (TSUP) (TC 2.A.102) family.

The protein resides in the cell membrane. The sequence is that of Probable membrane transporter protein y4hK from Sinorhizobium fredii (strain NBRC 101917 / NGR234).